A 285-amino-acid polypeptide reads, in one-letter code: ATP synthase gamma chain (285 aa).

It belongs to the ATPase gamma chain family. As to quaternary structure, F-type ATPases have 2 components, CF(1) - the catalytic core - and CF(0) - the membrane proton channel. CF(1) has five subunits: alpha(3), beta(3), gamma(1), delta(1), epsilon(1). CF(0) has three main subunits: a, b and c.

It is found in the cell membrane. Produces ATP from ADP in the presence of a proton gradient across the membrane. The gamma chain is believed to be important in regulating ATPase activity and the flow of protons through the CF(0) complex. The chain is ATP synthase gamma chain from Dehalococcoides mccartyi (strain CBDB1).